The chain runs to 222 residues: UPF0758 protein YicR (222 aa).

In terms of domain architecture, MPN spans 100–222; sequence PLLSPEMTRE…YVSFAERGWI (123 aa). Zn(2+) contacts are provided by His171, His173, and Asp184. The short motif at 171–184 is the JAMM motif element; sequence HNHPSGCAEPSKAD.

It belongs to the UPF0758 family. YicR subfamily.

The sequence is that of UPF0758 protein YicR from Escherichia coli (strain 55989 / EAEC).